The sequence spans 454 residues: Bifunctional protein GlmU (454 aa).

The segment at 1-231 (MDRATVSLIV…EAETLGVNTR (231 aa)) is pyrophosphorylase. Residues 11-14 (LAAG), Lys-25, Gln-78, 83-84 (GT), 106-108 (YGD), Gly-143, Glu-157, Asn-172, and Asn-229 each bind UDP-N-acetyl-alpha-D-glucosamine. Asp-108 lines the Mg(2+) pocket. A Mg(2+)-binding site is contributed by Asn-229. A linker region spans residues 232 to 252 (AQLAEAEAEFQKRARAAALED). Residues 253–454 (GVTLTAPDTV…AKAAKKKEAP (202 aa)) are N-acetyltransferase. UDP-N-acetyl-alpha-D-glucosamine-binding residues include Arg-318 and Lys-336. Residue His-348 is the Proton acceptor of the active site. UDP-N-acetyl-alpha-D-glucosamine is bound by residues Tyr-351 and Asn-362. Residues Ala-365, 371-372 (NY), Ser-390, Ser-408, and Arg-425 each bind acetyl-CoA.

It in the N-terminal section; belongs to the N-acetylglucosamine-1-phosphate uridyltransferase family. The protein in the C-terminal section; belongs to the transferase hexapeptide repeat family. Homotrimer. It depends on Mg(2+) as a cofactor.

The protein localises to the cytoplasm. The catalysed reaction is alpha-D-glucosamine 1-phosphate + acetyl-CoA = N-acetyl-alpha-D-glucosamine 1-phosphate + CoA + H(+). It carries out the reaction N-acetyl-alpha-D-glucosamine 1-phosphate + UTP + H(+) = UDP-N-acetyl-alpha-D-glucosamine + diphosphate. The protein operates within nucleotide-sugar biosynthesis; UDP-N-acetyl-alpha-D-glucosamine biosynthesis; N-acetyl-alpha-D-glucosamine 1-phosphate from alpha-D-glucosamine 6-phosphate (route II): step 2/2. Its pathway is nucleotide-sugar biosynthesis; UDP-N-acetyl-alpha-D-glucosamine biosynthesis; UDP-N-acetyl-alpha-D-glucosamine from N-acetyl-alpha-D-glucosamine 1-phosphate: step 1/1. It participates in bacterial outer membrane biogenesis; LPS lipid A biosynthesis. Catalyzes the last two sequential reactions in the de novo biosynthetic pathway for UDP-N-acetylglucosamine (UDP-GlcNAc). The C-terminal domain catalyzes the transfer of acetyl group from acetyl coenzyme A to glucosamine-1-phosphate (GlcN-1-P) to produce N-acetylglucosamine-1-phosphate (GlcNAc-1-P), which is converted into UDP-GlcNAc by the transfer of uridine 5-monophosphate (from uridine 5-triphosphate), a reaction catalyzed by the N-terminal domain. In Cereibacter sphaeroides (strain ATCC 17023 / DSM 158 / JCM 6121 / CCUG 31486 / LMG 2827 / NBRC 12203 / NCIMB 8253 / ATH 2.4.1.) (Rhodobacter sphaeroides), this protein is Bifunctional protein GlmU.